Reading from the N-terminus, the 946-residue chain is Bifunctional glutamine synthetase adenylyltransferase/adenylyl-removing enzyme (946 aa).

The tract at residues 1–441 (MSLLNDAALH…EFNWVIGDDE (441 aa)) is adenylyl removase. The interval 448 to 946 (DQALSELWAL…VIKIWEKFLD (499 aa)) is adenylyl transferase.

This sequence belongs to the GlnE family. It depends on Mg(2+) as a cofactor.

The enzyme catalyses [glutamine synthetase]-O(4)-(5'-adenylyl)-L-tyrosine + phosphate = [glutamine synthetase]-L-tyrosine + ADP. It catalyses the reaction [glutamine synthetase]-L-tyrosine + ATP = [glutamine synthetase]-O(4)-(5'-adenylyl)-L-tyrosine + diphosphate. Its function is as follows. Involved in the regulation of glutamine synthetase GlnA, a key enzyme in the process to assimilate ammonia. When cellular nitrogen levels are high, the C-terminal adenylyl transferase (AT) inactivates GlnA by covalent transfer of an adenylyl group from ATP to specific tyrosine residue of GlnA, thus reducing its activity. Conversely, when nitrogen levels are low, the N-terminal adenylyl removase (AR) activates GlnA by removing the adenylyl group by phosphorolysis, increasing its activity. The regulatory region of GlnE binds the signal transduction protein PII (GlnB) which indicates the nitrogen status of the cell. This Psychromonas ingrahamii (strain DSM 17664 / CCUG 51855 / 37) protein is Bifunctional glutamine synthetase adenylyltransferase/adenylyl-removing enzyme.